We begin with the raw amino-acid sequence, 255 residues long: MDEQVQEPLSDQVFINFRGDELREIFVNHLELQLRNAGINVFIDTKEQKGRRLQYLFTRIKKSKIALAIFSKRYCESKWCLDELVTMNEQMKEKKLVVIPIFYNVRSDDVKRAANPDGEGNLDGEFSLPFKQLKQNHAGEPERVEGWERALRSVTKRIGFSRSNSKYKHDTDFVLDIVKEVKKQLNIPTDNSWSAIGVAFLAITINLIFSFFIAPKYLPDQKFFQTPEWFIGTLAVVLASWFWYKNNQNKAPPPS.

The 177-residue stretch at 9 to 185 (LSDQVFINFR…DIVKEVKKQL (177 aa)) folds into the TIR domain. Glu-83 is an active-site residue. The next 2 helical transmembrane spans lie at 195 to 215 (AIGV…FIAP) and 223 to 243 (FFQT…SWFW). The KASH domain maps to 201-255 (LAITINLIFSFFIAPKYLPDQKFFQTPEWFIGTLAVVLASWFWYKNNQNKAPPPS).

In terms of assembly, forms homomers. Interacts with SUN1, SUN2, SUN3, SUN4 and SUN5.

It is found in the nucleus membrane. The catalysed reaction is NAD(+) + H2O = ADP-D-ribose + nicotinamide + H(+). In terms of biological role, could play a role in nuclear morphology, specifically nuclear size. This is TIR domain-containing protein from Arabidopsis thaliana (Mouse-ear cress).